A 298-amino-acid polypeptide reads, in one-letter code: Ribosomal RNA small subunit methyltransferase A (298 aa).

Asn35, Leu37, Gly62, Glu83, Asp108, and Asn133 together coordinate S-adenosyl-L-methionine.

Belongs to the class I-like SAM-binding methyltransferase superfamily. rRNA adenine N(6)-methyltransferase family. RsmA subfamily.

The protein resides in the cytoplasm. It catalyses the reaction adenosine(1518)/adenosine(1519) in 16S rRNA + 4 S-adenosyl-L-methionine = N(6)-dimethyladenosine(1518)/N(6)-dimethyladenosine(1519) in 16S rRNA + 4 S-adenosyl-L-homocysteine + 4 H(+). Specifically dimethylates two adjacent adenosines (A1518 and A1519) in the loop of a conserved hairpin near the 3'-end of 16S rRNA in the 30S particle. May play a critical role in biogenesis of 30S subunits. This is Ribosomal RNA small subunit methyltransferase A from Streptococcus pyogenes serotype M2 (strain MGAS10270).